Reading from the N-terminus, the 165-residue chain is 5-formyltetrahydrofolate cyclo-ligase (165 aa).

ATP is bound at residue 4 to 8 (KNSLR). Positions 51 and 56 each coordinate substrate. 116-124 (RIGFGKGYY) provides a ligand contact to ATP. Asp-125 lines the Mg(2+) pocket. Arg-126 and Trp-154 together coordinate ATP. Asp-155 is a binding site for Mg(2+).

Belongs to the 5-formyltetrahydrofolate cyclo-ligase family. In terms of assembly, monomer or homodimer. Mg(2+) is required as a cofactor.

It localises to the cytoplasm. The catalysed reaction is (6S)-5-formyl-5,6,7,8-tetrahydrofolate + ATP = (6R)-5,10-methenyltetrahydrofolate + ADP + phosphate. Its function is as follows. Involved in folate metabolism. Catalyzes the irreversible conversion of 5-formyltetrahydrofolate (5-FTHF) to yield 5,10-methenyltetrahydrofolate. This Mycoplasma genitalium (strain ATCC 33530 / DSM 19775 / NCTC 10195 / G37) (Mycoplasmoides genitalium) protein is 5-formyltetrahydrofolate cyclo-ligase.